Consider the following 660-residue polypeptide: DNA mismatch repair protein MutL (660 aa).

The interval 408–436 (DQTSASASVKHASRSQDENQLSEHPNLDF) is disordered. The span at 425 to 436 (ENQLSEHPNLDF) shows a compositional bias: polar residues.

It belongs to the DNA mismatch repair MutL/HexB family.

Functionally, this protein is involved in the repair of mismatches in DNA. It is required for dam-dependent methyl-directed DNA mismatch repair. May act as a 'molecular matchmaker', a protein that promotes the formation of a stable complex between two or more DNA-binding proteins in an ATP-dependent manner without itself being part of a final effector complex. In Streptococcus uberis (strain ATCC BAA-854 / 0140J), this protein is DNA mismatch repair protein MutL.